A 554-amino-acid chain; its full sequence is 3-(3-hydroxy-phenyl)propionate/3-hydroxycinnamic acid hydroxylase (554 aa).

FAD-binding positions include 17–46 (QVAI…VVEK) and 285–295 (FRINRVLLAGD).

Belongs to the PheA/TfdB FAD monooxygenase family. The cofactor is FAD.

It carries out the reaction 3-(3-hydroxyphenyl)propanoate + NADH + O2 + H(+) = 3-(2,3-dihydroxyphenyl)propanoate + NAD(+) + H2O. The enzyme catalyses (2E)-3-(3-hydroxyphenyl)prop-2-enoate + NADH + O2 + H(+) = (2E)-3-(2,3-dihydroxyphenyl)prop-2-enoate + NAD(+) + H2O. The protein operates within aromatic compound metabolism; 3-phenylpropanoate degradation. In terms of biological role, catalyzes the insertion of one atom of molecular oxygen into position 2 of the phenyl ring of 3-(3-hydroxyphenyl)propionate (3-HPP) and hydroxycinnamic acid (3HCI). The protein is 3-(3-hydroxy-phenyl)propionate/3-hydroxycinnamic acid hydroxylase of Klebsiella pneumoniae subsp. pneumoniae (strain ATCC 700721 / MGH 78578).